The chain runs to 435 residues: Bifunctional protein GlmU (435 aa).

The segment at 1-224 (MNDTSIIILA…EQNFMGINDK (224 aa)) is pyrophosphorylase. UDP-N-acetyl-alpha-D-glucosamine contacts are provided by residues 9-12 (LAAG), Lys-23, Gln-75, and 82-83 (GT). Residue Asp-103 coordinates Mg(2+). 4 residues coordinate UDP-N-acetyl-alpha-D-glucosamine: Gly-136, Glu-150, Asn-165, and Asn-222. Asn-222 serves as a coordination point for Mg(2+). Positions 225-245 (FQLSVAEKIMQDEIKQDLMKA) are linker. The interval 246 to 435 (GVLMRLPESI…KFFGKNNAEK (190 aa)) is N-acetyltransferase. Residues Arg-309 and Lys-326 each coordinate UDP-N-acetyl-alpha-D-glucosamine. The Proton acceptor role is filled by His-337. Residues Tyr-340 and Asn-351 each contribute to the UDP-N-acetyl-alpha-D-glucosamine site. Residues 360 to 361 (NY), Ser-379, Ala-397, and Arg-414 each bind acetyl-CoA.

This sequence in the N-terminal section; belongs to the N-acetylglucosamine-1-phosphate uridyltransferase family. The protein in the C-terminal section; belongs to the transferase hexapeptide repeat family. Homotrimer. It depends on Mg(2+) as a cofactor.

The protein localises to the cytoplasm. It carries out the reaction alpha-D-glucosamine 1-phosphate + acetyl-CoA = N-acetyl-alpha-D-glucosamine 1-phosphate + CoA + H(+). It catalyses the reaction N-acetyl-alpha-D-glucosamine 1-phosphate + UTP + H(+) = UDP-N-acetyl-alpha-D-glucosamine + diphosphate. Its pathway is nucleotide-sugar biosynthesis; UDP-N-acetyl-alpha-D-glucosamine biosynthesis; N-acetyl-alpha-D-glucosamine 1-phosphate from alpha-D-glucosamine 6-phosphate (route II): step 2/2. It participates in nucleotide-sugar biosynthesis; UDP-N-acetyl-alpha-D-glucosamine biosynthesis; UDP-N-acetyl-alpha-D-glucosamine from N-acetyl-alpha-D-glucosamine 1-phosphate: step 1/1. The protein operates within bacterial outer membrane biogenesis; LPS lipid A biosynthesis. Functionally, catalyzes the last two sequential reactions in the de novo biosynthetic pathway for UDP-N-acetylglucosamine (UDP-GlcNAc). The C-terminal domain catalyzes the transfer of acetyl group from acetyl coenzyme A to glucosamine-1-phosphate (GlcN-1-P) to produce N-acetylglucosamine-1-phosphate (GlcNAc-1-P), which is converted into UDP-GlcNAc by the transfer of uridine 5-monophosphate (from uridine 5-triphosphate), a reaction catalyzed by the N-terminal domain. In Campylobacter curvus (strain 525.92), this protein is Bifunctional protein GlmU.